The sequence spans 367 residues: Pentatricopeptide repeat-containing protein At1g11900 (367 aa).

PPR repeat units lie at residues 69 to 103 (SKID…NICL), 104 to 139 (PISV…GKEP), 141 to 175 (SSDC…SLPY), 176 to 210 (RLIV…ECKP), 211 to 241 (DVIT…MKED), 247 to 281 (NIIT…GIEP), 282 to 316 (DLLS…QIRP), and 317 to 347 (SVYV…LKNT).

Belongs to the PPR family. P subfamily.

The sequence is that of Pentatricopeptide repeat-containing protein At1g11900 from Arabidopsis thaliana (Mouse-ear cress).